Reading from the N-terminus, the 291-residue chain is Ribose-phosphate pyrophosphokinase (291 aa).

ATP contacts are provided by residues 34 to 36 and 93 to 94; these read DGE and RQ. Mg(2+) contacts are provided by histidine 127 and aspartate 165. Lysine 188 is an active-site residue. D-ribose 5-phosphate-binding positions include arginine 190, aspartate 216, and 220–224; that span reads STGGT.

This sequence belongs to the ribose-phosphate pyrophosphokinase family. Class III (archaeal) subfamily. Requires Mg(2+) as cofactor.

The protein localises to the cytoplasm. It catalyses the reaction D-ribose 5-phosphate + ATP = 5-phospho-alpha-D-ribose 1-diphosphate + AMP + H(+). It functions in the pathway metabolic intermediate biosynthesis; 5-phospho-alpha-D-ribose 1-diphosphate biosynthesis; 5-phospho-alpha-D-ribose 1-diphosphate from D-ribose 5-phosphate (route I): step 1/1. In terms of biological role, involved in the biosynthesis of the central metabolite phospho-alpha-D-ribosyl-1-pyrophosphate (PRPP) via the transfer of pyrophosphoryl group from ATP to 1-hydroxyl of ribose-5-phosphate (Rib-5-P). This chain is Ribose-phosphate pyrophosphokinase, found in Sulfurisphaera tokodaii (strain DSM 16993 / JCM 10545 / NBRC 100140 / 7) (Sulfolobus tokodaii).